The primary structure comprises 231 residues: Ureidoacrylate amidohydrolase RutB (231 aa).

D25 functions as the Proton acceptor in the catalytic mechanism. K134 is a catalytic residue. C167 acts as the Nucleophile in catalysis.

This sequence belongs to the isochorismatase family. RutB subfamily.

The catalysed reaction is (Z)-3-ureidoacrylate + H2O + H(+) = (Z)-3-aminoacrylate + NH4(+) + CO2. It catalyses the reaction (Z)-3-ureidoacrylate + H2O = (Z)-3-aminoacrylate + carbamate + H(+). It carries out the reaction (Z)-2-methylureidoacrylate + H2O + H(+) = (Z)-2-methylaminoacrylate + NH4(+) + CO2. In terms of biological role, hydrolyzes ureidoacrylate to form aminoacrylate and carbamate. The carbamate hydrolyzes spontaneously, thereby releasing one of the nitrogen atoms of the pyrimidine ring as ammonia and one of its carbon atoms as CO2. This is Ureidoacrylate amidohydrolase RutB from Escherichia coli O157:H7 (strain EC4115 / EHEC).